A 156-amino-acid polypeptide reads, in one-letter code: Biotin carboxyl carrier protein of acetyl-CoA carboxylase (156 aa).

Residues 80-156 (GNVVRSPMVG…EFDQPLFTIV (77 aa)) form the Biotinyl-binding domain. K122 is subject to N6-biotinyllysine.

In terms of assembly, homodimer.

It functions in the pathway lipid metabolism; fatty acid biosynthesis. In terms of biological role, this protein is a component of the acetyl coenzyme A carboxylase complex; first, biotin carboxylase catalyzes the carboxylation of the carrier protein and then the transcarboxylase transfers the carboxyl group to form malonyl-CoA. The chain is Biotin carboxyl carrier protein of acetyl-CoA carboxylase (accB) from Pseudomonas aeruginosa (strain ATCC 15692 / DSM 22644 / CIP 104116 / JCM 14847 / LMG 12228 / 1C / PRS 101 / PAO1).